The primary structure comprises 876 residues: AP-5 complex subunit beta-1 (876 aa).

As to quaternary structure, probably part of the adaptor protein complex 5 (AP-5), a tetramer composed of AP5B1, AP5M1, AP5S1 and AP5Z1. Interacts with ZFYVE26 and SPG11.

As part of AP-5, a probable fifth adaptor protein complex, it may be involved in endosomal transport. This chain is AP-5 complex subunit beta-1 (Ap5b1), found in Rattus norvegicus (Rat).